A 251-amino-acid chain; its full sequence is MSYISMKQLLEAGVHFGHETKRWNPKFKRFIFAERNGIFIIDLQKTLKQVDRSFDYIKDLSERGGVILFVGTKKQAQEIVELEARRTGMPFVTSRWLGGMLTNFKTMRTRIDRLTELDELFESGRINDRLKAERIKLGAERERLQRFVGGIRKMTRLPDAIFVVDPTKEVIAVQEANKLGIPVIALADTDSDPDVIDYIVPGNDDAIRSIQLITHRIGDLLVEARGGGEDVAAEGMEQGAQTDEQAEEVQA.

It belongs to the universal ribosomal protein uS2 family.

This Deinococcus deserti (strain DSM 17065 / CIP 109153 / LMG 22923 / VCD115) protein is Small ribosomal subunit protein uS2.